A 379-amino-acid chain; its full sequence is MSTNLRKTHPLVKIINNSFIDLPSPSNISAWWNFGSLLGACLILQTITGIFLAMHYSPDISLAFSSVAHITRDVQYGWLIRNMHANGASLFFMCIYLHIGRGLYYGSYLYKETWNTGITLLLLTMATAFVGYVLPWGQMSFWGATVITNLLSAVPYIGNTLVQWIWGGFSVDNATLTRFFTFHFLLPFTIMGMTMVHLLFLHETGSNNPTGLNSNTDKIPFHPYFSYKDLLGLILMLAFLLTLTLFYPNLLGDPDNFTPANPLSTPPHIKPEWYFLFAYAILRSIPNKLGGVLALLLSILVLFLMPTLHTSKQRTIQFRPLTQTLFWSFIANLMVLTWIGGQPVENPFITIGQVASILHFLILLILMPIAGVIENKMLT.

4 helical membrane-spanning segments follow: residues 34 to 54 (FGSL…FLAM), 78 to 99 (WLIR…YLHI), 114 to 134 (WNTG…GYVL), and 179 to 199 (FFTF…VHLL). Heme b contacts are provided by His-84 and His-98. His-183 and His-197 together coordinate heme b. His-202 provides a ligand contact to a ubiquinone. The next 4 membrane-spanning stretches (helical) occupy residues 227–247 (YKDL…TLFY), 289–309 (LGGV…PTLH), 321–341 (LTQT…WIGG), and 348–368 (FITI…ILMP).

It belongs to the cytochrome b family. In terms of assembly, the cytochrome bc1 complex contains 3 respiratory subunits (MT-CYB, CYC1 and UQCRFS1), 2 core proteins (UQCRC1 and UQCRC2) and probably 6 low-molecular weight proteins. The cofactor is heme b.

It is found in the mitochondrion inner membrane. In terms of biological role, component of the ubiquinol-cytochrome c reductase complex (complex III or cytochrome b-c1 complex) that is part of the mitochondrial respiratory chain. The b-c1 complex mediates electron transfer from ubiquinol to cytochrome c. Contributes to the generation of a proton gradient across the mitochondrial membrane that is then used for ATP synthesis. The chain is Cytochrome b (MT-CYB) from Glyptemys muhlenbergii (Bog turtle).